Consider the following 262-residue polypeptide: Acetylglutamate kinase (262 aa).

Residues 48–49 (GG), Arg70, and Asn162 each bind substrate.

Belongs to the acetylglutamate kinase family. ArgB subfamily.

It localises to the cytoplasm. It carries out the reaction N-acetyl-L-glutamate + ATP = N-acetyl-L-glutamyl 5-phosphate + ADP. It participates in amino-acid biosynthesis; L-arginine biosynthesis; N(2)-acetyl-L-ornithine from L-glutamate: step 2/4. Catalyzes the ATP-dependent phosphorylation of N-acetyl-L-glutamate. The sequence is that of Acetylglutamate kinase from Vibrio cholerae serotype O1 (strain ATCC 39541 / Classical Ogawa 395 / O395).